A 494-amino-acid polypeptide reads, in one-letter code: Sulfate adenylyltransferase subunit 1 (494 aa).

The tr-type G domain occupies 28–242 (TRPLRLITCG…TLELATVRST (215 aa)). The interval 37–44 (GSVDDGKS) is G1. Position 37–44 (37–44 (GSVDDGKS)) interacts with GTP. A G2 region spans residues 94-98 (GITID). Residues 115 to 118 (DTPG) are G3. Residues 115–119 (DTPGH) and 170–173 (NKID) each bind GTP. Residues 170–173 (NKID) are G4. Residues 207-209 (SAL) are G5.

Belongs to the TRAFAC class translation factor GTPase superfamily. Classic translation factor GTPase family. CysN/NodQ subfamily. Heterodimer composed of CysD, the smaller subunit, and CysN.

It catalyses the reaction sulfate + ATP + H(+) = adenosine 5'-phosphosulfate + diphosphate. It participates in sulfur metabolism; hydrogen sulfide biosynthesis; sulfite from sulfate: step 1/3. Its function is as follows. With CysD forms the ATP sulfurylase (ATPS) that catalyzes the adenylation of sulfate producing adenosine 5'-phosphosulfate (APS) and diphosphate, the first enzymatic step in sulfur assimilation pathway. APS synthesis involves the formation of a high-energy phosphoric-sulfuric acid anhydride bond driven by GTP hydrolysis by CysN coupled to ATP hydrolysis by CysD. The polypeptide is Sulfate adenylyltransferase subunit 1 (Agrobacterium fabrum (strain C58 / ATCC 33970) (Agrobacterium tumefaciens (strain C58))).